A 204-amino-acid chain; its full sequence is Thiamine-phosphate synthase (204 aa).

Residues Gln-34–Lys-38 and Asp-66 contribute to the 4-amino-2-methyl-5-(diphosphooxymethyl)pyrimidine site. Mg(2+) is bound by residues Asp-67 and Asp-86. Ser-104 provides a ligand contact to 4-amino-2-methyl-5-(diphosphooxymethyl)pyrimidine. Thr-131–Thr-133 contacts 2-[(2R,5Z)-2-carboxy-4-methylthiazol-5(2H)-ylidene]ethyl phosphate. Lys-134 is a binding site for 4-amino-2-methyl-5-(diphosphooxymethyl)pyrimidine. 2-[(2R,5Z)-2-carboxy-4-methylthiazol-5(2H)-ylidene]ethyl phosphate contacts are provided by residues Gly-160 and Val-180 to Ser-181.

It belongs to the thiamine-phosphate synthase family. Mg(2+) serves as cofactor.

The catalysed reaction is 2-[(2R,5Z)-2-carboxy-4-methylthiazol-5(2H)-ylidene]ethyl phosphate + 4-amino-2-methyl-5-(diphosphooxymethyl)pyrimidine + 2 H(+) = thiamine phosphate + CO2 + diphosphate. It catalyses the reaction 2-(2-carboxy-4-methylthiazol-5-yl)ethyl phosphate + 4-amino-2-methyl-5-(diphosphooxymethyl)pyrimidine + 2 H(+) = thiamine phosphate + CO2 + diphosphate. It carries out the reaction 4-methyl-5-(2-phosphooxyethyl)-thiazole + 4-amino-2-methyl-5-(diphosphooxymethyl)pyrimidine + H(+) = thiamine phosphate + diphosphate. It functions in the pathway cofactor biosynthesis; thiamine diphosphate biosynthesis; thiamine phosphate from 4-amino-2-methyl-5-diphosphomethylpyrimidine and 4-methyl-5-(2-phosphoethyl)-thiazole: step 1/1. Condenses 4-methyl-5-(beta-hydroxyethyl)thiazole monophosphate (THZ-P) and 2-methyl-4-amino-5-hydroxymethyl pyrimidine pyrophosphate (HMP-PP) to form thiamine monophosphate (TMP). The chain is Thiamine-phosphate synthase from Picrophilus torridus (strain ATCC 700027 / DSM 9790 / JCM 10055 / NBRC 100828 / KAW 2/3).